The chain runs to 430 residues: MKLQKPKGTADLLPAETAKWQYIEEIARGVFNDYNFKEIRTPMFESYELFSRATGETSDIVTKEMYDFEDKGGRHIALRPEGTASAVRAYIENKLYAPEVVKPVKLWYDAPMFRYERPQSGRLRQFHQFGVECLGVKNPAVDVEIIAMADTLFRQLGITGLKLALNTLGDMESRMAYRQALIDYLTPFENQLSEDSRRRLNENPLRVLDSKEAEDIAIVKNAPAILDYLNEASKAYFEEVKALLEALHIEYTIDPNMVRGLDYYNDTIFEFIVDFDGKDLTVCGGGRYDGLVEYFDGPATPAFGFGLGIERLLMIAQKQEINFIPEETLDVYIAVMGEKANLEATKLAESLREQAFKVERDFSNRKLGAQFKTAEKLGAELIITLGEDEIRTGQIKVKHNQTRKQVETTLKAVHESFAPIFEEIYADEEL.

Belongs to the class-II aminoacyl-tRNA synthetase family. In terms of assembly, homodimer.

The protein resides in the cytoplasm. It catalyses the reaction tRNA(His) + L-histidine + ATP = L-histidyl-tRNA(His) + AMP + diphosphate + H(+). The protein is Histidine--tRNA ligase of Lactococcus lactis subsp. lactis (strain IL1403) (Streptococcus lactis).